The chain runs to 261 residues: Cytochrome c oxidase subunit 3 (261 aa).

Over 1-15 (MTHQTHAYHMVNPSP) the chain is Mitochondrial matrix. A helical transmembrane segment spans residues 16-34 (WPLTGALSALLMTSGLVMW). Topologically, residues 35-40 (FHYHST) are mitochondrial intermembrane. Residues 41-66 (ILVLLGLLTNILTMYQWWRDVVREGT) form a helical membrane-spanning segment. The Mitochondrial matrix portion of the chain corresponds to 67–72 (FQGHHT). Residues 73–105 (PTVQKGLRYGMVLFIISEVFFFAGFFWAFYHSS) traverse the membrane as a helical segment. Over 106–128 (LAPTPELGGCWPPTGIHPLDPME) the chain is Mitochondrial intermembrane. The chain crosses the membrane as a helical span at residues 129-152 (VPLLNTSVLLASGVTITWAHHSLM). Topologically, residues 153-155 (EGN) are mitochondrial matrix. A helical transmembrane segment spans residues 156 to 183 (RKQMLQALFITISLGIYFTLLQASEYHE). Residues 184–190 (ASFSISD) are Mitochondrial intermembrane-facing. Residues 191-223 (GIYGSTFFMATGFHGLHVIIGSTFLAVCFLRQL) form a helical membrane-spanning segment. Over 224–232 (KFHFTSNHH) the chain is Mitochondrial matrix. The chain crosses the membrane as a helical span at residues 233–256 (FGFEAAAWYWHFVDVVWLFLYVSI). At 257–261 (YWWGS) the chain is on the mitochondrial intermembrane side.

Belongs to the cytochrome c oxidase subunit 3 family. In terms of assembly, component of the cytochrome c oxidase (complex IV, CIV), a multisubunit enzyme composed of 14 subunits. The complex is composed of a catalytic core of 3 subunits MT-CO1, MT-CO2 and MT-CO3, encoded in the mitochondrial DNA, and 11 supernumerary subunits COX4I, COX5A, COX5B, COX6A, COX6B, COX6C, COX7A, COX7B, COX7C, COX8 and NDUFA4, which are encoded in the nuclear genome. The complex exists as a monomer or a dimer and forms supercomplexes (SCs) in the inner mitochondrial membrane with NADH-ubiquinone oxidoreductase (complex I, CI) and ubiquinol-cytochrome c oxidoreductase (cytochrome b-c1 complex, complex III, CIII), resulting in different assemblies (supercomplex SCI(1)III(2)IV(1) and megacomplex MCI(2)III(2)IV(2)).

Its subcellular location is the mitochondrion inner membrane. It catalyses the reaction 4 Fe(II)-[cytochrome c] + O2 + 8 H(+)(in) = 4 Fe(III)-[cytochrome c] + 2 H2O + 4 H(+)(out). Functionally, component of the cytochrome c oxidase, the last enzyme in the mitochondrial electron transport chain which drives oxidative phosphorylation. The respiratory chain contains 3 multisubunit complexes succinate dehydrogenase (complex II, CII), ubiquinol-cytochrome c oxidoreductase (cytochrome b-c1 complex, complex III, CIII) and cytochrome c oxidase (complex IV, CIV), that cooperate to transfer electrons derived from NADH and succinate to molecular oxygen, creating an electrochemical gradient over the inner membrane that drives transmembrane transport and the ATP synthase. Cytochrome c oxidase is the component of the respiratory chain that catalyzes the reduction of oxygen to water. Electrons originating from reduced cytochrome c in the intermembrane space (IMS) are transferred via the dinuclear copper A center (CU(A)) of subunit 2 and heme A of subunit 1 to the active site in subunit 1, a binuclear center (BNC) formed by heme A3 and copper B (CU(B)). The BNC reduces molecular oxygen to 2 water molecules using 4 electrons from cytochrome c in the IMS and 4 protons from the mitochondrial matrix. This chain is Cytochrome c oxidase subunit 3 (MT-CO3), found in Dugong dugon (Dugong).